The sequence spans 277 residues: Ribosomal RNA small subunit methyltransferase A (277 aa).

Positions 20, 22, 47, 71, 94, and 116 each coordinate S-adenosyl-L-methionine.

The protein belongs to the class I-like SAM-binding methyltransferase superfamily. rRNA adenine N(6)-methyltransferase family. RsmA subfamily.

Its subcellular location is the cytoplasm. It carries out the reaction adenosine(1518)/adenosine(1519) in 16S rRNA + 4 S-adenosyl-L-methionine = N(6)-dimethyladenosine(1518)/N(6)-dimethyladenosine(1519) in 16S rRNA + 4 S-adenosyl-L-homocysteine + 4 H(+). In terms of biological role, specifically dimethylates two adjacent adenosines (A1518 and A1519) in the loop of a conserved hairpin near the 3'-end of 16S rRNA in the 30S particle. May play a critical role in biogenesis of 30S subunits. The protein is Ribosomal RNA small subunit methyltransferase A of Burkholderia sp.